Consider the following 491-residue polypeptide: Protein nucleotidyltransferase YdiU (491 aa).

ATP contacts are provided by Gly94, Gly96, Arg97, Lys117, Asp129, Gly130, Arg180, and Arg187. The active-site Proton acceptor is the Asp256. The Mg(2+) site is built by Asn257 and Asp266. Position 266 (Asp266) interacts with ATP.

This sequence belongs to the SELO family. Mg(2+) is required as a cofactor. The cofactor is Mn(2+).

The enzyme catalyses L-seryl-[protein] + ATP = 3-O-(5'-adenylyl)-L-seryl-[protein] + diphosphate. The catalysed reaction is L-threonyl-[protein] + ATP = 3-O-(5'-adenylyl)-L-threonyl-[protein] + diphosphate. It catalyses the reaction L-tyrosyl-[protein] + ATP = O-(5'-adenylyl)-L-tyrosyl-[protein] + diphosphate. It carries out the reaction L-histidyl-[protein] + UTP = N(tele)-(5'-uridylyl)-L-histidyl-[protein] + diphosphate. The enzyme catalyses L-seryl-[protein] + UTP = O-(5'-uridylyl)-L-seryl-[protein] + diphosphate. The catalysed reaction is L-tyrosyl-[protein] + UTP = O-(5'-uridylyl)-L-tyrosyl-[protein] + diphosphate. Nucleotidyltransferase involved in the post-translational modification of proteins. It can catalyze the addition of adenosine monophosphate (AMP) or uridine monophosphate (UMP) to a protein, resulting in modifications known as AMPylation and UMPylation. This Clostridium botulinum (strain 657 / Type Ba4) protein is Protein nucleotidyltransferase YdiU.